A 302-amino-acid polypeptide reads, in one-letter code: uncharacterized protein (302 aa).

The signal sequence occupies residues 1–28 (MNKLTAQNLLKKSRFLKYSLLTSISVGA).

This is an uncharacterized protein from Rickettsia prowazekii (strain Madrid E).